Reading from the N-terminus, the 373-residue chain is tRNA (guanine(26)-N(2))-dimethyltransferase (373 aa).

The Trm1 methyltransferase domain maps to 2–365 (KIISEGETKL…AELSDLVVLI (364 aa)). 5 residues coordinate S-adenosyl-L-methionine: Arg35, Arg66, Asp86, Asp113, and Ala114.

It belongs to the class I-like SAM-binding methyltransferase superfamily. Trm1 family.

It carries out the reaction guanosine(26) in tRNA + 2 S-adenosyl-L-methionine = N(2)-dimethylguanosine(26) in tRNA + 2 S-adenosyl-L-homocysteine + 2 H(+). In terms of biological role, dimethylates a single guanine residue at position 26 of a number of tRNAs using S-adenosyl-L-methionine as donor of the methyl groups. The protein is tRNA (guanine(26)-N(2))-dimethyltransferase of Methanococcus maripaludis (strain C6 / ATCC BAA-1332).